Consider the following 199-residue polypeptide: Inner membrane protein E199L (199 aa).

A glycan (N-linked (GlcNAc...) asparagine; by host) is linked at N131. Residues 150-170 (INVMNHPFLTLILIILILIII) traverse the membrane as a helical segment.

Belongs to the asfivirus E199L family. Interacts with host PYCR2; this interaction results in autophagy activation. Contains intramolecular disulfide bonds.

The protein localises to the virion membrane. It is found in the host membrane. Functionally, essential for viral fusion with host endosomal membrane and core release. Not required for virus morphogenesis and egress. Induces complete autophagy through the interaction with and down-regulation of host PYCR2. The polypeptide is Inner membrane protein E199L (African swine fever virus (isolate Tick/South Africa/Pretoriuskop Pr4/1996) (ASFV)).